Reading from the N-terminus, the 64-residue chain is uncharacterized protein (64 aa).

A disordered region spans residues 1–64 (MNNPNIVPPH…QNQPPQRPQY (64 aa)). Positions 8 to 32 (PPHFNQHQQQNHNQNQPPHHMNNPN) are enriched in low complexity.

This is an uncharacterized protein from Dictyostelium discoideum (Social amoeba).